The primary structure comprises 162 residues: Caveolin-2 (162 aa).

Residues Met-1 to Lys-86 are Cytoplasmic-facing. The residue at position 19 (Tyr-19) is a Phosphotyrosine; by SRC. Phosphoserine occurs at positions 20 and 23. A Phosphotyrosine; by SRC modification is found at Tyr-27. Ser-36 is subject to Phosphoserine. An intramembrane region (helical) is located at residues Phe-87–Leu-107. The Cytoplasmic portion of the chain corresponds to Ser-108 to Asp-162.

Belongs to the caveolin family. As to quaternary structure, monomer or homodimer. Interacts with CAV1; the interaction forms a stable heterooligomeric complex that is required for targeting to lipid rafts and for caveolae formation. Tyrosine phosphorylated forms do not form heterooligomers with the Tyr-19-phosphorylated form existing as a monomer or dimer, and the Tyr-27-form as a monomer only. Interacts (tyrosine phosphorylated form) with the SH2 domain-containing proteins, RASA1, NCK1 and SRC. Interacts (tyrosine phosphorylated form) with INSR, the interaction (Tyr-27-phosphorylated form) is increased on insulin stimulation. Interacts (Tyr-19 phosphorylated form) with MAPK1 (phosphorylated form); the interaction, promoted by insulin, leads to nuclear location and MAPK1 activation. Interacts with STAT3; the interaction is increased on insulin-induced tyrosine phosphorylation leading to STAT activation. Post-translationally, phosphorylated on serine and tyrosine residues. CAV1 promotes phosphorylation on Ser-23 which then targets the complex to the plasma membrane, lipid rafts and caveolae. Phosphorylation on Ser-36 appears to modulate mitosis in endothelial cells. Phosphorylation on both Tyr-19 and Tyr-27 is required for insulin-induced 'Ser-727' phosphorylation of STAT3 and its activation. Phosphorylation on Tyr-19 is required for insulin-induced phosphorylation of MAPK1 and DNA binding of STAT3. Tyrosine phosphorylation is induced by both EGF and insulin (By. similarity).

It localises to the nucleus. The protein localises to the cytoplasm. Its subcellular location is the golgi apparatus membrane. The protein resides in the cell membrane. It is found in the membrane. It localises to the caveola. In terms of biological role, may act as a scaffolding protein within caveolar membranes. Interacts directly with G-protein alpha subunits and can functionally regulate their activity. Acts as an accessory protein in conjunction with CAV1 in targeting to lipid rafts and driving caveolae formation. The Ser-36 phosphorylated form has a role in modulating mitosis in endothelial cells. Positive regulator of cellular mitogenesis of the MAPK signaling pathway. Required for the insulin-stimulated nuclear translocation and activation of MAPK1 and STAT3, and the subsequent regulation of cell cycle progression. This chain is Caveolin-2 (CAV2), found in Callithrix jacchus (White-tufted-ear marmoset).